A 1024-amino-acid chain; its full sequence is Carbamoyl phosphate synthase large chain (1024 aa).

The segment at 1–396 is carboxyphosphate synthetic domain; the sequence is MDIKKILVIG…AWQKAVRMID (396 aa). Arginine 125, arginine 165, glycine 171, glycine 172, lysine 204, leucine 206, glutamate 211, glycine 237, valine 238, histidine 239, glutamine 280, and glutamate 294 together coordinate ATP. An ATP-grasp 1 domain is found at 129-323; sequence QKAMREAGIP…LAYIAAKLAL (195 aa). Mg(2+) contacts are provided by glutamine 280, glutamate 294, and asparagine 296. Residues glutamine 280, glutamate 294, and asparagine 296 each contribute to the Mn(2+) site. An oligomerization domain region spans residues 397–536; that stretch reads IGEPGLVGGP…LTYGGQYDDK (140 aa). The interval 536–917 is carbamoyl phosphate synthetic domain; that stretch reads KTPGVDYLVV…LKSWLSATPN (382 aa). Residues 660-849 form the ATP-grasp 2 domain; it reads SKLLDRLGIK…YMSLVADVLT (190 aa). The ATP site is built by arginine 696, lysine 735, glutamate 742, glycine 766, valine 767, histidine 768, serine 769, glutamine 809, and glutamate 820. Mg(2+) is bound by residues glutamine 809, glutamate 820, and asparagine 822. Residues glutamine 809, glutamate 820, and asparagine 822 each contribute to the Mn(2+) site. Residues 917–1024 form the MGS-like domain; the sequence is NKIPSKTALI…KNGKLEVAPW (108 aa). The interval 918 to 1024 is allosteric domain; the sequence is KIPSKTALIY…KNGKLEVAPW (107 aa).

The protein belongs to the CarB family. Composed of two chains; the small (or glutamine) chain promotes the hydrolysis of glutamine to ammonia, which is used by the large (or ammonia) chain to synthesize carbamoyl phosphate. Tetramer of heterodimers (alpha,beta)4. The cofactor is Mg(2+). Mn(2+) serves as cofactor.

The catalysed reaction is hydrogencarbonate + L-glutamine + 2 ATP + H2O = carbamoyl phosphate + L-glutamate + 2 ADP + phosphate + 2 H(+). It catalyses the reaction hydrogencarbonate + NH4(+) + 2 ATP = carbamoyl phosphate + 2 ADP + phosphate + 2 H(+). It functions in the pathway amino-acid biosynthesis; L-arginine biosynthesis; carbamoyl phosphate from bicarbonate: step 1/1. The protein operates within pyrimidine metabolism; UMP biosynthesis via de novo pathway; (S)-dihydroorotate from bicarbonate: step 1/3. Its function is as follows. Large subunit of the glutamine-dependent carbamoyl phosphate synthetase (CPSase). CPSase catalyzes the formation of carbamoyl phosphate from the ammonia moiety of glutamine, carbonate, and phosphate donated by ATP, constituting the first step of 2 biosynthetic pathways, one leading to arginine and/or urea and the other to pyrimidine nucleotides. The large subunit (synthetase) binds the substrates ammonia (free or transferred from glutamine from the small subunit), hydrogencarbonate and ATP and carries out an ATP-coupled ligase reaction, activating hydrogencarbonate by forming carboxy phosphate which reacts with ammonia to form carbamoyl phosphate. The polypeptide is Carbamoyl phosphate synthase large chain (Pyrobaculum aerophilum (strain ATCC 51768 / DSM 7523 / JCM 9630 / CIP 104966 / NBRC 100827 / IM2)).